The sequence spans 760 residues: Phosphoribosylformylglycinamidine synthase subunit PurL (760 aa).

Residues 1–25 (MNMSLPADRDTAKKPSAQKPSAHAQ) form a disordered region. The active site involves H69. ATP-binding residues include Y72 and K115. A Mg(2+)-binding site is contributed by E117. Substrate-binding positions include 118–121 (SHNH) and R140. H119 (proton acceptor) is an active-site residue. Residue D141 coordinates Mg(2+). Substrate is bound at residue Q265. D293 serves as a coordination point for Mg(2+). 337–339 (ESQ) provides a ligand contact to substrate. The ATP site is built by N519 and G556. Residue N557 participates in Mg(2+) binding. S559 contacts substrate.

It belongs to the FGAMS family. Monomer. Part of the FGAM synthase complex composed of 1 PurL, 1 PurQ and 2 PurS subunits.

It is found in the cytoplasm. The catalysed reaction is N(2)-formyl-N(1)-(5-phospho-beta-D-ribosyl)glycinamide + L-glutamine + ATP + H2O = 2-formamido-N(1)-(5-O-phospho-beta-D-ribosyl)acetamidine + L-glutamate + ADP + phosphate + H(+). It functions in the pathway purine metabolism; IMP biosynthesis via de novo pathway; 5-amino-1-(5-phospho-D-ribosyl)imidazole from N(2)-formyl-N(1)-(5-phospho-D-ribosyl)glycinamide: step 1/2. In terms of biological role, part of the phosphoribosylformylglycinamidine synthase complex involved in the purines biosynthetic pathway. Catalyzes the ATP-dependent conversion of formylglycinamide ribonucleotide (FGAR) and glutamine to yield formylglycinamidine ribonucleotide (FGAM) and glutamate. The FGAM synthase complex is composed of three subunits. PurQ produces an ammonia molecule by converting glutamine to glutamate. PurL transfers the ammonia molecule to FGAR to form FGAM in an ATP-dependent manner. PurS interacts with PurQ and PurL and is thought to assist in the transfer of the ammonia molecule from PurQ to PurL. This Tropheryma whipplei (strain TW08/27) (Whipple's bacillus) protein is Phosphoribosylformylglycinamidine synthase subunit PurL.